A 338-amino-acid polypeptide reads, in one-letter code: RNA 3'-terminal phosphate cyclase (338 aa).

Residues Gln-103 and 283–287 (YLADQ) each bind ATP. The active-site Tele-AMP-histidine intermediate is His-308.

Belongs to the RNA 3'-terminal cyclase family. Type 1 subfamily.

The protein resides in the cytoplasm. The catalysed reaction is a 3'-end 3'-phospho-ribonucleotide-RNA + ATP = a 3'-end 2',3'-cyclophospho-ribonucleotide-RNA + AMP + diphosphate. In terms of biological role, catalyzes the conversion of 3'-phosphate to a 2',3'-cyclic phosphodiester at the end of RNA. The mechanism of action of the enzyme occurs in 3 steps: (A) adenylation of the enzyme by ATP; (B) transfer of adenylate to an RNA-N3'P to produce RNA-N3'PP5'A; (C) and attack of the adjacent 2'-hydroxyl on the 3'-phosphorus in the diester linkage to produce the cyclic end product. The biological role of this enzyme is unknown but it is likely to function in some aspects of cellular RNA processing. This chain is RNA 3'-terminal phosphate cyclase, found in Escherichia coli O139:H28 (strain E24377A / ETEC).